The sequence spans 337 residues: 3-isopropylmalate dehydrogenase (337 aa).

Residues Arg-86, Arg-96, Arg-117, and Asp-201 each contribute to the substrate site. Mg(2+) contacts are provided by Asp-201, Asp-225, and Asp-229. Residue 258 to 270 participates in NAD(+) binding; sequence GAAFDIAGKNIGN.

Belongs to the isocitrate and isopropylmalate dehydrogenases family. Homotetramer. Requires Mg(2+) as cofactor. It depends on Mn(2+) as a cofactor.

It localises to the cytoplasm. The catalysed reaction is (2R,3S)-3-isopropylmalate + NAD(+) = 4-methyl-2-oxopentanoate + CO2 + NADH. The protein operates within amino-acid biosynthesis; L-leucine biosynthesis; L-leucine from 3-methyl-2-oxobutanoate: step 3/4. Catalyzes the oxidation of 3-carboxy-2-hydroxy-4-methylpentanoate (3-isopropylmalate) to 3-carboxy-4-methyl-2-oxopentanoate. The product decarboxylates to 4-methyl-2 oxopentanoate. In Sulfurisphaera tokodaii (strain DSM 16993 / JCM 10545 / NBRC 100140 / 7) (Sulfolobus tokodaii), this protein is 3-isopropylmalate dehydrogenase (leuB).